We begin with the raw amino-acid sequence, 229 residues long: Cytochrome c oxidase subunit 2 (229 aa).

The Mitochondrial intermembrane portion of the chain corresponds to Met1–Ser14. Residues Pro15–Met45 traverse the membrane as a helical segment. At Val46–Gln59 the chain is on the mitochondrial matrix side. The chain crosses the membrane as a helical span at residues Glu60–Thr87. Residues Asp88–Ser229 lie on the Mitochondrial intermembrane side of the membrane. The Cu cation site is built by His161, Cys196, Glu198, Cys200, His204, and Met207. A Mg(2+)-binding site is contributed by Glu198.

The protein belongs to the cytochrome c oxidase subunit 2 family. In terms of assembly, component of the cytochrome c oxidase (complex IV, CIV), a multisubunit enzyme composed of 14 subunits. The complex is composed of a catalytic core of 3 subunits MT-CO1, MT-CO2 and MT-CO3, encoded in the mitochondrial DNA, and 11 supernumerary subunits COX4I, COX5A, COX5B, COX6A, COX6B, COX6C, COX7A, COX7B, COX7C, COX8 and NDUFA4, which are encoded in the nuclear genome. The complex exists as a monomer or a dimer and forms supercomplexes (SCs) in the inner mitochondrial membrane with NADH-ubiquinone oxidoreductase (complex I, CI) and ubiquinol-cytochrome c oxidoreductase (cytochrome b-c1 complex, complex III, CIII), resulting in different assemblies (supercomplex SCI(1)III(2)IV(1) and megacomplex MCI(2)III(2)IV(2)). Found in a complex with TMEM177, COA6, COX18, COX20, SCO1 and SCO2. Interacts with TMEM177 in a COX20-dependent manner. Interacts with COX20. Interacts with COX16. Cu cation serves as cofactor.

The protein localises to the mitochondrion inner membrane. It catalyses the reaction 4 Fe(II)-[cytochrome c] + O2 + 8 H(+)(in) = 4 Fe(III)-[cytochrome c] + 2 H2O + 4 H(+)(out). In terms of biological role, component of the cytochrome c oxidase, the last enzyme in the mitochondrial electron transport chain which drives oxidative phosphorylation. The respiratory chain contains 3 multisubunit complexes succinate dehydrogenase (complex II, CII), ubiquinol-cytochrome c oxidoreductase (cytochrome b-c1 complex, complex III, CIII) and cytochrome c oxidase (complex IV, CIV), that cooperate to transfer electrons derived from NADH and succinate to molecular oxygen, creating an electrochemical gradient over the inner membrane that drives transmembrane transport and the ATP synthase. Cytochrome c oxidase is the component of the respiratory chain that catalyzes the reduction of oxygen to water. Electrons originating from reduced cytochrome c in the intermembrane space (IMS) are transferred via the dinuclear copper A center (CU(A)) of subunit 2 and heme A of subunit 1 to the active site in subunit 1, a binuclear center (BNC) formed by heme A3 and copper B (CU(B)). The BNC reduces molecular oxygen to 2 water molecules using 4 electrons from cytochrome c in the IMS and 4 protons from the mitochondrial matrix. The chain is Cytochrome c oxidase subunit 2 (MT-CO2) from Petromyzon marinus (Sea lamprey).